The sequence spans 607 residues: Elongation factor 4 (607 aa).

A tr-type G domain is found at 11 to 193; the sequence is KNIRNFSIIA…KIVETIPAPS (183 aa). GTP-binding positions include 23-28 and 140-143; these read DHGKST and NKID.

Belongs to the TRAFAC class translation factor GTPase superfamily. Classic translation factor GTPase family. LepA subfamily.

It localises to the cell membrane. It carries out the reaction GTP + H2O = GDP + phosphate + H(+). In terms of biological role, required for accurate and efficient protein synthesis under certain stress conditions. May act as a fidelity factor of the translation reaction, by catalyzing a one-codon backward translocation of tRNAs on improperly translocated ribosomes. Back-translocation proceeds from a post-translocation (POST) complex to a pre-translocation (PRE) complex, thus giving elongation factor G a second chance to translocate the tRNAs correctly. Binds to ribosomes in a GTP-dependent manner. This Staphylococcus carnosus (strain TM300) protein is Elongation factor 4.